The following is a 253-amino-acid chain: Sulfate transporter CysZ (253 aa).

Transmembrane regions (helical) follow at residues 31–51, 75–95, 151–171, and 222–242; these read FVILPLLVNILLMGGAFWWLF, LLWPLAVISVLLVFGYFFSTI, IVLLILYFIPGIGQTVAPVLW, and IPLLNLFIMPVAVCGATAMWV.

It belongs to the CysZ family.

It is found in the cell inner membrane. In terms of biological role, high affinity, high specificity proton-dependent sulfate transporter, which mediates sulfate uptake. Provides the sulfur source for the cysteine synthesis pathway. The protein is Sulfate transporter CysZ of Escherichia coli O7:K1 (strain IAI39 / ExPEC).